The sequence spans 371 residues: Bifunctional chorismate mutase/prephenate dehydratase (371 aa).

The Chorismate mutase domain occupies 1 to 92; sequence MTLKNALLAF…DSVLTQKKWI (92 aa). 7 residues coordinate substrate: arginine 11, arginine 28, lysine 39, aspartate 48, glutamate 52, serine 84, and glutamine 88. Residues 104 to 284 enclose the Prephenate dehydratase domain; the sequence is KISFLGSFGS…NITQFIILAQ (181 aa). The interval 285 to 371 is regulatory; that stretch reads KKTYITNKKT…IKCIKILGCF (87 aa).

It is found in the cytoplasm. It carries out the reaction chorismate = prephenate. The catalysed reaction is prephenate + H(+) = 3-phenylpyruvate + CO2 + H2O. It participates in amino-acid biosynthesis; L-phenylalanine biosynthesis; phenylpyruvate from prephenate: step 1/1. The protein operates within metabolic intermediate biosynthesis; prephenate biosynthesis; prephenate from chorismate: step 1/1. In terms of biological role, catalyzes the Claisen rearrangement of chorismate to prephenate and the decarboxylation/dehydration of prephenate to phenylpyruvate. This is Bifunctional chorismate mutase/prephenate dehydratase (pheA) from Buchnera aphidicola subsp. Baizongia pistaciae (strain Bp).